Reading from the N-terminus, the 146-residue chain is uncharacterized protein (146 aa).

Residues 7–27 (FVLSITIVLVILIIIAFIWYN) traverse the membrane as a helical segment.

The protein belongs to the asfivirus E146L family.

It is found in the host membrane. The protein localises to the virion. This is an uncharacterized protein from Ornithodoros (relapsing fever ticks).